We begin with the raw amino-acid sequence, 999 residues long: Sarcoplasmic/endoplasmic reticulum calcium ATPase 3 (999 aa).

At 1–48 (MEAAHSVPVQDVLSRFGVAESCGLSPEQVRRNREKYGPNELPAEERKS) the chain is on the cytoplasmic side. A helical membrane pass occupies residues 49–69 (LWELVLEQFEDLLVRILLMAA). The Lumenal segment spans residues 70–89 (FLSFILAWFEEGEESTTAFV). Residues 90–110 (EPIVIIMILIANAVVGVWQER) form a helical membrane-spanning segment. Over 111 to 253 (NAESAIEALK…PEKTPLQQKL (143 aa)) the chain is Cytoplasmic. The chain crosses the membrane as a helical span at residues 254-273 (DEFSQQLSKVIFLVCIAVWV). The Lumenal segment spans residues 274-295 (INISHFSDPVHGGSWFRGAIYY). Residues 296-313 (FKTSVALAVAAIPEGLPA) form a helical membrane-spanning segment. Ca(2+) is bound by residues V304, A305, I307, and E309. The Cytoplasmic portion of the chain corresponds to 314-757 (VITTCLALGT…EEGRAIYNNM (444 aa)). Residue D351 is the 4-aspartylphosphate intermediate of the active site. Mg(2+)-binding residues include D351 and T353. An ATP-binding site is contributed by T353. Residues 370 to 400 (EKVEGTQCSLHEFSITGSTYAPEGQILKDEK) form an interaction with phospholamban 1 region. Positions 442, 489, 515, 560, 625, 626, 627, 678, and 684 each coordinate ATP. D703 serves as a coordination point for Mg(2+). N706 lines the ATP pocket. The chain crosses the membrane as a helical span at residues 758 to 777 (KQFIRYLISSNVGEVVCIFL). The Ca(2+) site is built by N768 and E771. Over 778 to 787 (TAILGLPEAL) the chain is Lumenal. Residues 788–808 (IPVQLLWVNLVTDGLPATALG) form a helical membrane-spanning segment. An interaction with phospholamban 2 region spans residues 788 to 808 (IPVQLLWVNLVTDGLPATALG). Residues N796, T799, and D800 each contribute to the Ca(2+) site. Topologically, residues 809–828 (FNPPDLDIMDKLPRNPKEPL) are cytoplasmic. The helical transmembrane segment at 829–851 (ISGWLFFRYLAIGVYVGLATVGA) threads the bilayer. The Lumenal portion of the chain corresponds to 852–897 (ATWWFLYDAEGPQVSFHQLRNFMRCTEDNPIFEGVNCEIFESRYPT). A helical membrane pass occupies residues 898–917 (TMALSVLVTIEMCNALNSVS). E908 is a Ca(2+) binding site. Over 918–930 (ENQSLLRMPPWLN) the chain is Cytoplasmic. The chain crosses the membrane as a helical span at residues 931 to 949 (IWLLGAIVMSMALHFFILY). The Lumenal portion of the chain corresponds to 950-964 (VKPMPLIFQVTPLSW). A helical transmembrane segment spans residues 965-985 (PQWVVVLKISLPVILLDEGLK). Over 986–999 (YLSRNHLEGEEDKK) the chain is Cytoplasmic.

The protein belongs to the cation transport ATPase (P-type) (TC 3.A.3) family. Type IIA subfamily. As to quaternary structure, interacts with sarcolipin (SLN). Interacts with phospholamban (PLN). Interacts with myoregulin (MRLN). Interacts with DWORF. Mg(2+) is required as a cofactor. In terms of tissue distribution, found in spleen, lung, intestine and brain.

Its subcellular location is the endoplasmic reticulum membrane. It is found in the sarcoplasmic reticulum membrane. The catalysed reaction is Ca(2+)(in) + ATP + H2O = Ca(2+)(out) + ADP + phosphate + H(+). Its activity is regulated as follows. Inhibited by sarcolipin (SLN), phospholamban (PLN) and myoregulin (MRLN). Enhanced by DWORF; DWORF increases activity by displacing sarcolipin (SLN), phospholamban (PLN) and myoregulin (MRLN). In terms of biological role, this magnesium-dependent enzyme catalyzes the hydrolysis of ATP coupled with the transport of calcium. Transports calcium ions from the cytosol into the sarcoplasmic/endoplasmic reticulum lumen. Contributes to calcium sequestration involved in muscular excitation/contraction. The polypeptide is Sarcoplasmic/endoplasmic reticulum calcium ATPase 3 (ATP2A3) (Gallus gallus (Chicken)).